A 500-amino-acid chain; its full sequence is MPVDLDNSSTVSGDASVSSTGNQNLTPKSVGKKKRNLPGMPDPDAEVIALSPKTLMATNRFVCEICNKGFQRDQNLQLHRRGHNLPWKLRQRSTKEVRKKVYVCPVSGCVHHDPSRALGDLTGIKKHFCRKHGEKKWKCEKCSKKYAVQSDWKAHSKICGTKEYKCDCGTLFSRRDSFITHRAFCDALAEESAKNHTQSKKLYPETVTRKNPEIEQKSPAAVESSPSLPPSSPPSVAIAPAPAISVETESVKIISSSVLPIQNSPESQENNNHPEVIIEEASRTIGFNVSSSDLSNDHSNNNGGYAGLFVSSTASPSLYASSTASPSLFAPSSSMEPISLCLSTNPSLFGPTIRDPPHFLTPLPPQPAMSATALLQKAAQMGSTGSGGSLLRGLGIVSTTSSSMELSNHDALSLAPGLGLGLPCSSGGSGSGLKELMMGNSSVFGPKQTTLDFLGLGRAVGNGGNTGGGLSALLTSIGGGGGIDLFGSGEFSGKDIGRSS.

The tract at residues 1–42 (MPVDLDNSSTVSGDASVSSTGNQNLTPKSVGKKKRNLPGMPD) is disordered. Residues 8-21 (SSTVSGDASVSSTG) are compositionally biased toward low complexity. Ser-51 is modified (phosphoserine). 2 C2H2-type zinc fingers span residues 61 to 83 (FVCEICNKGFQRDQNLQLHRRGH) and 102 to 132 (YVCPVSGCVHHDPSRALGDLTGIKKHFCRKH). The Nuclear localization signal signature appears at 124–131 (IKKHFCRK). The C2H2-type 2; degenerate zinc-finger motif lies at 137 to 160 (WKCEKCSKKYAVQSDWKAHSKICG). The Zn(2+) site is built by Cys-139, Cys-142, His-155, Cys-159, Cys-166, Cys-168, His-181, and Cys-185. The CCHC-type 2; atypical zinc-finger motif lies at 164–187 (YKCDCGTLFSRRDSFITHRAFCDA). The interval 174–186 (RRDSFITHRAFCD) is SHR-binding. A disordered region spans residues 196–236 (HTQSKKLYPETVTRKNPEIEQKSPAAVESSPSLPPSSPPSV). Positions 207–216 (VTRKNPEIEQ) are enriched in basic and acidic residues.

Interacts with the DELLA proteins (e.g. GAI/RGA2, RGA, RGL1, RGL2 and RGLG3), acting as coactivators. As to expression, at 3 days post anthesis (DPA), expressed in the chalazal endosperm region. By 6 DPA, expressed in the endosperm and embryo. In fully germinated seed, strongest expression in the root tip and not detected in the cotyledons. In 4-days old seedlings, restricted to the vasculature of the cotyledons, the shoot apical meristem region, and the root tip. By 8 days, restricted to newly emerged leaves.

It is found in the nucleus. Transcription factor promoting the transition to germination by regulating light and hormonal signaling during seed maturation. Acts as a positive regulator of phytochrome and/or gibberellin action. The polypeptide is Zinc finger protein ENHYDROUS (Arabidopsis thaliana (Mouse-ear cress)).